A 258-amino-acid chain; its full sequence is Regulatory protein RecX (258 aa).

Belongs to the RecX family.

The protein resides in the cytoplasm. Functionally, modulates RecA activity. This chain is Regulatory protein RecX, found in Streptococcus thermophilus (strain ATCC BAA-491 / LMD-9).